The primary structure comprises 250 residues: Coproheme decarboxylase (250 aa).

Fe-coproporphyrin III contacts are provided by residues Arg131, 145–149 (YPMNK), His172, and Gln185. Tyr145 is a catalytic residue.

Belongs to the ChdC family. Type 1 subfamily. Fe-coproporphyrin III serves as cofactor.

It carries out the reaction Fe-coproporphyrin III + 2 H2O2 + 2 H(+) = heme b + 2 CO2 + 4 H2O. It catalyses the reaction Fe-coproporphyrin III + H2O2 + H(+) = harderoheme III + CO2 + 2 H2O. The catalysed reaction is harderoheme III + H2O2 + H(+) = heme b + CO2 + 2 H2O. The protein operates within porphyrin-containing compound metabolism; protoheme biosynthesis. In terms of biological role, involved in coproporphyrin-dependent heme b biosynthesis. Catalyzes the decarboxylation of Fe-coproporphyrin III (coproheme) to heme b (protoheme IX), the last step of the pathway. The reaction occurs in a stepwise manner with a three-propionate intermediate. The chain is Coproheme decarboxylase from Staphylococcus aureus (strain bovine RF122 / ET3-1).